Consider the following 415-residue polypeptide: Elongation factor 1-gamma 1 (415 aa).

The residue at position 2 (S2) is an N-acetylserine. The GST N-terminal domain maps to 2 to 78 (SQGTLYANFR…YLVKLSQDDK (77 aa)). Phosphothreonine is present on T32. Positions 89 to 215 (DLNAQAQIIR…KDFKFADKPL (127 aa)) constitute a GST C-terminal domain. The tract at residues 212-256 (DKPLSPPQKKKEKKAPAAAPAASKKKEEAKPAATETETSSKKPKH) is disordered. An EF-1-gamma C-terminal domain is found at 254–415 (PKHPLELLGK…KEIVDGKVLK (162 aa)).

As to quaternary structure, the eukaryotic elongation factor 1 complex (eEF1) is probably a heterohexamer. Two trimeric complexes, each composed of eEF1A (TEF1 or TEF2), eEF1Balpha (EFB1) and eEF1Bgamma (CAM1 or TEF4), are probably dimerized via the eF1Bgamma subunits. The eEF1B subcomplex with the GEF activity is formed of eEF1Balpha and eEF1Bgamma. CAM1 interacts with EFB1. Component of a complex bound to MXR1 promoter region.

The protein localises to the cytoplasm. It is found in the nucleus. The protein operates within protein biosynthesis; polypeptide chain elongation. Functionally, subunit of the eukaryotic elongation factor 1 complex (eEF1). Probably plays a role in anchoring the complex to other cellular components. May be involved in transcriptional regulation of MXR1. In Saccharomyces cerevisiae (strain ATCC 204508 / S288c) (Baker's yeast), this protein is Elongation factor 1-gamma 1 (CAM1).